The following is a 375-amino-acid chain: Actin (375 aa).

Belongs to the actin family.

The protein localises to the cytoplasm. The protein resides in the cytoskeleton. It carries out the reaction ATP + H2O = ADP + phosphate + H(+). In terms of biological role, actins are highly conserved proteins that are involved in various types of cell motility and are ubiquitously expressed in all eukaryotic cells. The polypeptide is Actin (Giardia intestinalis (Giardia lamblia)).